The following is a 283-amino-acid chain: Transmembrane protein 45B (283 aa).

The next 7 membrane-spanning stretches (helical) occupy residues 7–27 (HALP…KCPF), 55–75 (LIEG…EQFV), 99–119 (MYLF…SHHV), 121–141 (VGLD…LFYF), 153–173 (IHSL…MEVF), 187–207 (LAIL…PLSG), and 218–238 (IMFI…IVGI). A disordered region spans residues 261–283 (GLRKSTSTDSSSQKALLQESDEE). The segment covering 264-275 (KSTSTDSSSQKA) has biased composition (polar residues).

This sequence belongs to the TMEM45 family.

It localises to the membrane. This chain is Transmembrane protein 45B (tmem45b), found in Danio rerio (Zebrafish).